We begin with the raw amino-acid sequence, 182 residues long: Large ribosomal subunit protein uL5 (182 aa).

This sequence belongs to the universal ribosomal protein uL5 family. In terms of assembly, part of the 50S ribosomal subunit; part of the 5S rRNA/L5/L18/L25 subcomplex. Contacts the 5S rRNA and the P site tRNA. Forms a bridge to the 30S subunit in the 70S ribosome.

This is one of the proteins that bind and probably mediate the attachment of the 5S RNA into the large ribosomal subunit, where it forms part of the central protuberance. In the 70S ribosome it contacts protein S13 of the 30S subunit (bridge B1b), connecting the 2 subunits; this bridge is implicated in subunit movement. Contacts the P site tRNA; the 5S rRNA and some of its associated proteins might help stabilize positioning of ribosome-bound tRNAs. The chain is Large ribosomal subunit protein uL5 from Borrelia hermsii (strain HS1 / DAH).